Reading from the N-terminus, the 337-residue chain is Primase homolog protein (337 aa).

The region spanning 205–304 (SEIIIVEGEP…WLVKWPKKSE (100 aa)) is the Toprim domain. The Mg(2+) site is built by glutamate 211, aspartate 273, and aspartate 275.

It depends on Mg(2+) as a cofactor.

In terms of biological role, may act as a DNA primase. This chain is Primase homolog protein, found in Arabidopsis thaliana (Mouse-ear cress).